We begin with the raw amino-acid sequence, 297 residues long: tRNA pseudouridine synthase B (297 aa).

Residue aspartate 44 is the Nucleophile of the active site.

Belongs to the pseudouridine synthase TruB family. Type 1 subfamily.

It catalyses the reaction uridine(55) in tRNA = pseudouridine(55) in tRNA. In terms of biological role, responsible for synthesis of pseudouridine from uracil-55 in the psi GC loop of transfer RNAs. This Corynebacterium aurimucosum (strain ATCC 700975 / DSM 44827 / CIP 107346 / CN-1) (Corynebacterium nigricans) protein is tRNA pseudouridine synthase B.